The sequence spans 309 residues: Taste receptor type 2 member 20 (309 aa).

Residues 1-6 (MMSFLH) lie on the Extracellular side of the membrane. The chain crosses the membrane as a helical span at residues 7–27 (IVFSILVVVAFILGNFANGFI). At 28–46 (ALINFIAWVKRQKISSADQ) the chain is on the cytoplasmic side. A helical membrane pass occupies residues 47 to 67 (IIAALAVSRVGLLWVILLHWY). At 68 to 79 (STVLNPTSSNLK) the chain is on the extracellular side. Residues 80-100 (VIIFISNAWAVTNHFSIWLAT) form a helical membrane-spanning segment. At 101-125 (SLSIFYLLKIVNFSRLIFHHLKRKA) the chain is on the cytoplasmic side. Residues 126-146 (KSVVLVIVLGSLFFLVCHLVM) traverse the membrane as a helical segment. At 147-178 (KHTYINVWTEECEGNVTWKIKLRNAMHLSNLT) the chain is on the extracellular side. N-linked (GlcNAc...) asparagine glycans are attached at residues Asn-161 and Asn-176. A helical membrane pass occupies residues 179–199 (VAMLANLIPFTLTLISFLLLI). The Cytoplasmic segment spans residues 200–229 (YSLCKHLKKMQLHGKGSQDPSTKIHIKALQ). Residues 230–250 (TVTSFLILLAIYFLCLIISFW) traverse the membrane as a helical segment. At 251–259 (NFKMRPKEI) the chain is on the extracellular side. The chain crosses the membrane as a helical span at residues 260–280 (VLMLCQAFGIIYPSFHSFILI). Topologically, residues 281–309 (WGNKTLKQTFLSVLWQVTCWAKGQNQSTP) are cytoplasmic.

Belongs to the G-protein coupled receptor T2R family. As to expression, expressed in subsets of taste receptor cells of the tongue and exclusively in gustducin-positive cells.

The protein localises to the membrane. Functionally, receptor that may play a role in the perception of bitterness and is gustducin-linked. May play a role in sensing the chemical composition of the gastrointestinal content. The activity of this receptor may stimulate alpha gustducin, mediate PLC-beta-2 activation and lead to the gating of TRPM5. The protein is Taste receptor type 2 member 20 (TAS2R20) of Homo sapiens (Human).